We begin with the raw amino-acid sequence, 150 residues long: 1,4-dihydroxy-2-naphthoyl-CoA hydrolase (150 aa).

Aspartate 19 is a catalytic residue.

Belongs to the 4-hydroxybenzoyl-CoA thioesterase family. DHNA-CoA hydrolase subfamily.

It carries out the reaction 1,4-dihydroxy-2-naphthoyl-CoA + H2O = 1,4-dihydroxy-2-naphthoate + CoA + H(+). It participates in cofactor biosynthesis; phylloquinone biosynthesis. It functions in the pathway quinol/quinone metabolism; 1,4-dihydroxy-2-naphthoate biosynthesis; 1,4-dihydroxy-2-naphthoate from chorismate: step 7/7. Its function is as follows. Catalyzes the hydrolysis of 1,4-dihydroxy-2-naphthoyl-CoA (DHNA-CoA) to 1,4-dihydroxy-2-naphthoate (DHNA), a reaction involved in phylloquinone (vitamin K1) biosynthesis. This chain is 1,4-dihydroxy-2-naphthoyl-CoA hydrolase, found in Prochlorococcus marinus (strain MIT 9312).